The primary structure comprises 123 residues: Small ribosomal subunit protein uS12 (123 aa).

Aspartate 89 is subject to 3-methylthioaspartic acid.

It belongs to the universal ribosomal protein uS12 family. Part of the 30S ribosomal subunit. Contacts proteins S8 and S17. May interact with IF1 in the 30S initiation complex.

Its function is as follows. With S4 and S5 plays an important role in translational accuracy. In terms of biological role, interacts with and stabilizes bases of the 16S rRNA that are involved in tRNA selection in the A site and with the mRNA backbone. Located at the interface of the 30S and 50S subunits, it traverses the body of the 30S subunit contacting proteins on the other side and probably holding the rRNA structure together. The combined cluster of proteins S8, S12 and S17 appears to hold together the shoulder and platform of the 30S subunit. The protein is Small ribosomal subunit protein uS12 of Maridesulfovibrio salexigens (strain ATCC 14822 / DSM 2638 / NCIMB 8403 / VKM B-1763) (Desulfovibrio salexigens).